The sequence spans 429 residues: Ribosomal RNA small subunit methyltransferase B (429 aa).

Residues 254 to 260, D277, D303, and D322 contribute to the S-adenosyl-L-methionine site; that span reads CAAPGGK. C375 (nucleophile) is an active-site residue.

Belongs to the class I-like SAM-binding methyltransferase superfamily. RsmB/NOP family.

Its subcellular location is the cytoplasm. The catalysed reaction is cytidine(967) in 16S rRNA + S-adenosyl-L-methionine = 5-methylcytidine(967) in 16S rRNA + S-adenosyl-L-homocysteine + H(+). Functionally, specifically methylates the cytosine at position 967 (m5C967) of 16S rRNA. In Yersinia pseudotuberculosis serotype O:1b (strain IP 31758), this protein is Ribosomal RNA small subunit methyltransferase B.